We begin with the raw amino-acid sequence, 93 residues long: MSRSIKKPPFCAPHVLRLVNKAVAQNKLNSIINIHSRSSVILNKFIGLTFGVYNGKTYVPVKVNDNMVGRKFGEFSPTRRYTGHVGDKKVSRK.

The protein belongs to the universal ribosomal protein uS19 family.

Functionally, protein S19 forms a complex with S13 that binds strongly to the 16S ribosomal RNA. This Ehrlichia canis (strain Jake) protein is Small ribosomal subunit protein uS19.